Here is a 277-residue protein sequence, read N- to C-terminus: Large ribosomal subunit protein uL2 (277 aa).

Disordered stretches follow at residues Lys32–Gly58 and Val225–Lys277. A compositionally biased stretch (basic residues) spans Tyr258–Lys277.

Belongs to the universal ribosomal protein uL2 family. As to quaternary structure, part of the 50S ribosomal subunit. Forms a bridge to the 30S subunit in the 70S ribosome.

One of the primary rRNA binding proteins. Required for association of the 30S and 50S subunits to form the 70S ribosome, for tRNA binding and peptide bond formation. It has been suggested to have peptidyltransferase activity; this is somewhat controversial. Makes several contacts with the 16S rRNA in the 70S ribosome. The polypeptide is Large ribosomal subunit protein uL2 (Borrelia garinii subsp. bavariensis (strain ATCC BAA-2496 / DSM 23469 / PBi) (Borreliella bavariensis)).